The primary structure comprises 20 residues: Fibrinogen (20 aa).

The 20-residue stretch at 1-20 folds into the Vitellogenin domain; the sequence is LHSNLEYQYRYSGRVASGIP.

As to expression, secreted into the hemolymph.

It is found in the secreted. The protein localises to the extracellular space. Functionally, involved in lipid transport. Plays a role in hemolymph clotting. May be involved in wound healing in the cuticle. This is Fibrinogen from Pacifastacus leniusculus (Signal crayfish).